Here is a 491-residue protein sequence, read N- to C-terminus: Transmembrane protein 200A (491 aa).

Over 1–61 (MIATGGVITG…RGKIRLYSPS (61 aa)) the chain is Cytoplasmic. The tract at residues 16 to 41 (RQDSARSQQHVNLSPSPATQEKKPIR) is disordered. Residues 20–34 (ARSQQHVNLSPSPAT) show a composition bias toward polar residues. Residues 62–82 (GFFLILGVLISIIGIAMAVLG) form a helical membrane-spanning segment. Residues 83–126 (YWPQKEHFIDAETTLSTNETQVIRNEGGVVVRFFEQHLHSDKMK) are Extracellular-facing. A glycan (N-linked (GlcNAc...) asparagine) is linked at N100. Residues 127–147 (MLGPFTMGIGIFIFICANAIL) traverse the membrane as a helical segment. Over 148 to 491 (HENRDKETKI…LKRGTSETRF (344 aa)) the chain is Cytoplasmic. S350 is subject to Phosphoserine.

It belongs to the TMEM200 family. Expressed in cerebellum.

Its subcellular location is the membrane. In Homo sapiens (Human), this protein is Transmembrane protein 200A (TMEM200A).